A 213-amino-acid chain; its full sequence is uncharacterized protein (213 aa).

This is an uncharacterized protein from Acanthamoeba polyphaga mimivirus (APMV).